Here is a 789-residue protein sequence, read N- to C-terminus: Kin of IRRE-like protein 1 (789 aa).

The signal sequence occupies residues M1 to A47. N5, N78, and N172 each carry an N-linked (GlcNAc...) asparagine glycan. The Extracellular segment spans residues L48–A531. Ig-like C2-type domains are found at residues P49–T147, P152–E248, P255–N335, P340–L419, and P424–E520. C74 and C132 are oxidised to a cystine. Disulfide bonds link C175–C232 and C276–C319. A glycan (N-linked (GlcNAc...) asparagine) is linked at N329. Residues C361 and C403 are joined by a disulfide bond. The Cell attachment site signature appears at R437–D439. Cysteines 445 and 504 form a disulfide. An N-linked (GlcNAc...) asparagine glycan is attached at N503. The chain crosses the membrane as a helical span at residues G532–L552. At Y553 to V789 the chain is on the cytoplasmic side. S606 carries the phosphoserine modification. Phosphotyrosine; by FYN is present on residues Y637 and Y638. Phosphotyrosine is present on residues Y654 and Y657. The disordered stretch occupies residues R687–Q713. Residues G694 to S712 are compositionally biased toward low complexity. Position 756 is a phosphotyrosine (Y756).

The protein belongs to the immunoglobulin superfamily. Interacts with TJP1/ZO-1 and with NPHS2/podocin (via the C-terminus). Interacts with NPHS1/nephrin (via the Ig-like domains); this interaction is dependent on KIRREL1 glycosylation. Homodimer (via the Ig-like domains). Interacts when tyrosine-phosphorylated with GRB2. Phosphorylation probably regulates the interaction with NPHS2. Phosphorylated at Tyr-637 and Tyr-638 by FYN, leading to GRB2 binding. In terms of processing, N-glycosylated.

The protein localises to the cell membrane. Required for proper function of the glomerular filtration barrier. It is involved in the maintenance of a stable podocyte architecture with interdigitating foot processes connected by specialized cell-cell junctions, known as the slit diaphragm. It is a signaling protein that needs the presence of TEC kinases to fully trans-activate the transcription factor AP-1. The protein is Kin of IRRE-like protein 1 (Kirrel1) of Rattus norvegicus (Rat).